The sequence spans 615 residues: Delta(14)-sterol reductase LBR (615 aa).

The Tudor domain maps to 1-62 (MPSRKFADGE…DIKPLTSFRQ (62 aa)). Over 1-211 (MPSRKFADGE…IRAKDLEFGG (211 aa)) the chain is Nuclear. Residues 52–109 (NDIKPLTSFRQRKGGSTSSSPSRRRGSRSRSRSRSPGRPPKSARRSASASHQADIKEA) form a disordered region. An N6-acetyllysine modification is found at Lys-55. The residue at position 58 (Thr-58) is a Phosphothreonine. Phosphoserine occurs at positions 59 and 67. A phosphoserine; by CDK1 mark is found at Ser-71 and Ser-86. Basic residues predominate over residues 73 to 86 (SRRRGSRSRSRSRS). Phosphoserine occurs at positions 97 and 99. Thr-118 is subject to Phosphothreonine. A Phosphoserine modification is found at Ser-128. The residue at position 200 (Thr-200) is a Phosphothreonine. Transmembrane regions (helical) follow at residues 212–232 (VPGV…LLLM), 258–278 (VFGV…LPIG), 299–319 (FYAF…GVEF), 326–346 (FLQF…YLYM), 386–406 (FCEL…MLLA), 447–467 (IIHD…VPFI), 481–501 (EVSW…YVIF), and 561–581 (PCGF…MLLV). N6-acetyllysine occurs at positions 594 and 601.

It belongs to the ERG4/ERG24 family. In terms of assembly, interacts with CBX5. Interacts with DNA. Interaction with DNA is sequence independent with higher affinity for supercoiled and relaxed circular DNA than linear DNA. Interacts with lamin B. Interacts with CLNK. Interacts with TMEM147; promoting LBR localization to the nucleus inner membrane. Phosphorylated by CDK1 in mitosis when the inner nuclear membrane breaks down into vesicles that dissociate from the lamina and the chromatin. It is phosphorylated by different protein kinases in interphase when the membrane is associated with these structures. Phosphorylation of LBR and HP1 proteins may be responsible for some of the alterations in chromatin organization and nuclear structure which occur at various times during the cell cycle. Phosphorylated by SRPK1. In late anaphase LBR is dephosphorylated, probably by PP1 and/or PP2A, allowing reassociation with chromatin. As to expression, expressed in the bone marrow, liver, heart, adrenal gland, lung, placenta and uterus. Expressed in osteoclasts and osteoblast-like cells.

It is found in the nucleus inner membrane. The protein localises to the endoplasmic reticulum membrane. It localises to the cytoplasm. Its subcellular location is the nucleus. The catalysed reaction is 5alpha-cholest-8,14-dien-3beta-ol + NADPH + H(+) = 5alpha-cholest-8-en-3beta-ol + NADP(+). It catalyses the reaction 4,4-dimethyl-5alpha-cholesta-8,24-dien-3beta-ol + NADP(+) = 4,4-dimethyl-5alpha-cholesta-8,14,24-trien-3beta-ol + NADPH + H(+). It carries out the reaction 4,4-dimethyl-8,14-cholestadien-3beta-ol + NADPH + H(+) = 4,4-dimethyl-5alpha-cholest-8-en-3beta-ol + NADP(+). Its pathway is steroid biosynthesis; cholesterol biosynthesis. Its function is as follows. Catalyzes the reduction of the C14-unsaturated bond of lanosterol, as part of the metabolic pathway leading to cholesterol biosynthesis. Plays a critical role in myeloid cell cholesterol biosynthesis which is essential to both myeloid cell growth and functional maturation. Mediates the activation of NADPH oxidases, perhaps by maintaining critical levels of cholesterol required for membrane lipid raft formation during neutrophil differentiation. Anchors the lamina and the heterochromatin to the inner nuclear membrane. The sequence is that of Delta(14)-sterol reductase LBR (LBR) from Homo sapiens (Human).